Reading from the N-terminus, the 904-residue chain is E3 ubiquitin-protein ligase HACE1 (904 aa).

7 ANK repeats span residues 34-63 (AVYT…DVNY), 68-97 (VKRS…NPNY), 101-130 (SGCT…DVNI), 134-163 (EGLT…NVDV), 167-196 (MGQT…DINR), 200-230 (SGAT…YLPD), and 232-261 (NGVT…RLFQ). Positions 569 to 904 (SNEKLKQGIA…HCGSYGYTMA (336 aa)) constitute an HECT domain. Catalysis depends on cysteine 871, which acts as the Glycyl thioester intermediate.

The protein resides in the golgi apparatus. It localises to the golgi stack membrane. Its subcellular location is the cytoplasm. The protein localises to the endoplasmic reticulum. It catalyses the reaction S-ubiquitinyl-[E2 ubiquitin-conjugating enzyme]-L-cysteine + [acceptor protein]-L-lysine = [E2 ubiquitin-conjugating enzyme]-L-cysteine + N(6)-ubiquitinyl-[acceptor protein]-L-lysine.. Its pathway is protein modification; protein ubiquitination. Its function is as follows. E3 ubiquitin-protein ligase involved in Golgi membrane fusion and regulation of small GTPases. Acts as a regulator of Golgi membrane dynamics during the cell cycle: recruited to Golgi membrane by Rab proteins and regulates postmitotic Golgi membrane fusion. Acts by mediating ubiquitination during mitotic Golgi disassembly, ubiquitination serving as a signal for Golgi reassembly later, after cell division. This chain is E3 ubiquitin-protein ligase HACE1 (hace1), found in Danio rerio (Zebrafish).